Here is a 442-residue protein sequence, read N- to C-terminus: Interferon-related developmental regulator 2 (442 aa).

Residues 1–15 (MPRARKGNTLRKGGQ) show a composition bias toward basic residues. The interval 1–71 (MPRARKGNTL…DVVDEQGQQE (71 aa)) is disordered. The span at 43–56 (TASECPSLLSTTAE) shows a compositional bias: polar residues.

It belongs to the IFRD family. Associates with ribosomes; promoting ribosome inactivation. In terms of tissue distribution, expressed in many tissues including heart, brain, placenta, lung, liver, skeletal muscle, kidney and pancreas.

Functionally, ribosome-binding protein that acts as an inhibitor of mRNA translation by promoting ribosome inactivation. Associates with the P- and E-sites of the ribosome and inserts a C-terminal helix into the mRNA exit channel to preclude translation. The protein is Interferon-related developmental regulator 2 of Homo sapiens (Human).